A 706-amino-acid polypeptide reads, in one-letter code: Heat shock protein 75 kDa, mitochondrial (706 aa).

A mitochondrion-targeting transit peptide spans 1-60; the sequence is MARELRALLLWGRGLQSALRAPALAGVRRGKPVLHLQKTTVHFRDPTQSLASGISAGQLY. ATP is bound by residues asparagine 121 and aspartate 160. A Phosphoserine modification is found at serine 172. Position 173 (asparagine 173) interacts with ATP. Phosphothreonine is present on threonine 176. A Phosphoserine modification is found at serine 196. Phenylalanine 207 is an ATP binding site. An N6-acetyllysine mark is found at lysine 264, lysine 326, and lysine 334. Residue arginine 404 coordinates ATP. N6-acetyllysine is present on residues lysine 426, lysine 433, and lysine 468. Position 496 is a phosphothreonine (threonine 496). Serine 570 is subject to Phosphoserine.

The protein belongs to the heat shock protein 90 family. In terms of assembly, binds to the intracellular domain of tumor necrosis factor type 1 receptor. Binds to RB1. Interacts with SRC. Interacts with SDHA.

It localises to the mitochondrion. The protein localises to the mitochondrion inner membrane. The protein resides in the mitochondrion matrix. Its function is as follows. Chaperone that expresses an ATPase activity. Involved in maintaining mitochondrial function and polarization, downstream of PINK1 and mitochondrial complex I. Is a negative regulator of mitochondrial respiration able to modulate the balance between oxidative phosphorylation and aerobic glycolysis. The impact of TRAP1 on mitochondrial respiration is probably mediated by modulation of mitochondrial SRC and inhibition of SDHA. The sequence is that of Heat shock protein 75 kDa, mitochondrial (Trap1) from Rattus norvegicus (Rat).